Here is a 137-residue protein sequence, read N- to C-terminus: ATP synthase epsilon chain (137 aa).

The protein belongs to the ATPase epsilon chain family. As to quaternary structure, F-type ATPases have 2 components, CF(1) - the catalytic core - and CF(0) - the membrane proton channel. CF(1) has five subunits: alpha(3), beta(3), gamma(1), delta(1), epsilon(1). CF(0) has three main subunits: a, b and c.

The protein localises to the cellular thylakoid membrane. Produces ATP from ADP in the presence of a proton gradient across the membrane. The polypeptide is ATP synthase epsilon chain (Trichodesmium erythraeum (strain IMS101)).